The following is a 214-amino-acid chain: Large ribosomal subunit protein bL25 (214 aa).

The tract at residues 179 to 214 is disordered; that stretch reads VPPTQGPSEAEIEEVEAGDADTPEPEVVGEKEEDEE. The segment covering 188-202 has biased composition (acidic residues); it reads AEIEEVEAGDADTPE.

The protein belongs to the bacterial ribosomal protein bL25 family. CTC subfamily. As to quaternary structure, part of the 50S ribosomal subunit; part of the 5S rRNA/L5/L18/L25 subcomplex. Contacts the 5S rRNA. Binds to the 5S rRNA independently of L5 and L18.

Its function is as follows. This is one of the proteins that binds to the 5S RNA in the ribosome where it forms part of the central protuberance. This chain is Large ribosomal subunit protein bL25, found in Staphylococcus carnosus (strain TM300).